A 407-amino-acid chain; its full sequence is Phospholipid-transporting ATPase accessory subunit CDC50 (407 aa).

Residues 1–33 (MAPRRRRGAGQDGSDDGRSDSDAPKNRPPNTAF) form a disordered region. Topologically, residues 1–48 (MAPRRRRGAGQDGSDDGRSDSDAPKNRPPNTAFRQQRMRAWQCVLTPK) are cytoplasmic. The segment covering 15–25 (DDGRSDSDAPK) has biased composition (basic and acidic residues). A helical transmembrane segment spans residues 49 to 69 (LIVTVFSILAAIYLGFGAWLT). The Extracellular portion of the chain corresponds to 70-359 (YLAHTVRDLK…TMGSRNIWPG (290 aa)). Cys85 and Cys139 are oxidised to a cystine. N-linked (GlcNAc...) asparagine glycosylation is found at Asn131 and Asn189. The cysteines at positions 193 and 210 are disulfide-linked. Residues Asn219, Asn232, Asn241, and Asn314 are each glycosylated (N-linked (GlcNAc...) asparagine). The chain crosses the membrane as a helical span at residues 360–380 (IIFLIVGGICLVLDIYFILSF). The Cytoplasmic portion of the chain corresponds to 381–407 (FIWRPRKLGDPSYLSWNQPSAPGGHSS).

This sequence belongs to the CDC50/LEM3 family. In terms of assembly, component of a flippase complex consisting of DNF1 and CDC50. Interacts with DNF1; the interaction is direct.

It is found in the cell membrane. In terms of biological role, accessory component of a P4-ATPase flippase complex which catalyzes the hydrolysis of ATP coupled to the transport of phosphatidylcholine and phosphatidylserine from the lumen to the cytosolic leaflet of membranes and ensures the maintenance of asymmetric distribution of phospholipids. The polypeptide is Phospholipid-transporting ATPase accessory subunit CDC50 (Chaetomium thermophilum (strain DSM 1495 / CBS 144.50 / IMI 039719) (Thermochaetoides thermophila)).